The chain runs to 188 residues: PRA1 family protein F3 (188 aa).

The next 4 helical transmembrane spans lie at Ile-74 to Phe-94, Thr-95 to Phe-115, Thr-123 to Phe-143, and Ile-145 to Thr-165.

This sequence belongs to the PRA1 family. As to quaternary structure, interacts with PRA1F2 and PRA1D. Interacts with ACD11 and BPA1. In terms of tissue distribution, expressed in lateral roots, lateral root caps and columella cells.

It is found in the endoplasmic reticulum membrane. It localises to the membrane. The protein resides in the cytoplasm. May be involved in both secretory and endocytic intracellular trafficking in the endosomal/prevacuolar compartments. This Arabidopsis thaliana (Mouse-ear cress) protein is PRA1 family protein F3.